Consider the following 311-residue polypeptide: 4-hydroxy-3-methylbut-2-enyl diphosphate reductase (311 aa).

Cysteine 14 is a binding site for [4Fe-4S] cluster. Residues histidine 43 and histidine 76 each contribute to the (2E)-4-hydroxy-3-methylbut-2-enyl diphosphate site. Dimethylallyl diphosphate is bound by residues histidine 43 and histidine 76. Histidine 43 and histidine 76 together coordinate isopentenyl diphosphate. Cysteine 98 is a [4Fe-4S] cluster binding site. A (2E)-4-hydroxy-3-methylbut-2-enyl diphosphate-binding site is contributed by histidine 126. Histidine 126 contributes to the dimethylallyl diphosphate binding site. Isopentenyl diphosphate is bound at residue histidine 126. Residue glutamate 128 is the Proton donor of the active site. Threonine 166 contributes to the (2E)-4-hydroxy-3-methylbut-2-enyl diphosphate binding site. A [4Fe-4S] cluster-binding site is contributed by cysteine 196. Serine 224, serine 225, asparagine 226, and serine 268 together coordinate (2E)-4-hydroxy-3-methylbut-2-enyl diphosphate. 4 residues coordinate dimethylallyl diphosphate: serine 224, serine 225, asparagine 226, and serine 268. Positions 224, 225, 226, and 268 each coordinate isopentenyl diphosphate.

This sequence belongs to the IspH family. Requires [4Fe-4S] cluster as cofactor.

It catalyses the reaction isopentenyl diphosphate + 2 oxidized [2Fe-2S]-[ferredoxin] + H2O = (2E)-4-hydroxy-3-methylbut-2-enyl diphosphate + 2 reduced [2Fe-2S]-[ferredoxin] + 2 H(+). The catalysed reaction is dimethylallyl diphosphate + 2 oxidized [2Fe-2S]-[ferredoxin] + H2O = (2E)-4-hydroxy-3-methylbut-2-enyl diphosphate + 2 reduced [2Fe-2S]-[ferredoxin] + 2 H(+). It functions in the pathway isoprenoid biosynthesis; dimethylallyl diphosphate biosynthesis; dimethylallyl diphosphate from (2E)-4-hydroxy-3-methylbutenyl diphosphate: step 1/1. The protein operates within isoprenoid biosynthesis; isopentenyl diphosphate biosynthesis via DXP pathway; isopentenyl diphosphate from 1-deoxy-D-xylulose 5-phosphate: step 6/6. In terms of biological role, catalyzes the conversion of 1-hydroxy-2-methyl-2-(E)-butenyl 4-diphosphate (HMBPP) into a mixture of isopentenyl diphosphate (IPP) and dimethylallyl diphosphate (DMAPP). Acts in the terminal step of the DOXP/MEP pathway for isoprenoid precursor biosynthesis. This chain is 4-hydroxy-3-methylbut-2-enyl diphosphate reductase, found in Chromobacterium violaceum (strain ATCC 12472 / DSM 30191 / JCM 1249 / CCUG 213 / NBRC 12614 / NCIMB 9131 / NCTC 9757 / MK).